We begin with the raw amino-acid sequence, 1025 residues long: Error-prone DNA polymerase (1025 aa).

It belongs to the DNA polymerase type-C family. DnaE2 subfamily.

It localises to the cytoplasm. It catalyses the reaction DNA(n) + a 2'-deoxyribonucleoside 5'-triphosphate = DNA(n+1) + diphosphate. DNA polymerase involved in damage-induced mutagenesis and translesion synthesis (TLS). It is not the major replicative DNA polymerase. The protein is Error-prone DNA polymerase of Pseudomonas fluorescens (strain Pf0-1).